We begin with the raw amino-acid sequence, 76 residues long: Acyl carrier protein (76 aa).

One can recognise a Carrier domain in the interval 1–76 (MSIEERVKKI…SAIDYVQNNQ (76 aa)). Residue S36 is modified to O-(pantetheine 4'-phosphoryl)serine.

The protein belongs to the acyl carrier protein (ACP) family. 4'-phosphopantetheine is transferred from CoA to a specific serine of apo-ACP by AcpS. This modification is essential for activity because fatty acids are bound in thioester linkage to the sulfhydryl of the prosthetic group.

It is found in the cytoplasm. It participates in lipid metabolism; fatty acid biosynthesis. Its function is as follows. Carrier of the growing fatty acid chain in fatty acid biosynthesis. The polypeptide is Acyl carrier protein (Actinobacillus succinogenes (strain ATCC 55618 / DSM 22257 / CCUG 43843 / 130Z)).